The chain runs to 153 residues: Transcriptional repressor NrdR (153 aa).

The segment at 1–20 (MKCPFCNSADTRVKNSRHSD) is disordered. The segment at 3 to 34 (CPFCNSADTRVKNSRHSDDNMSVRRRRLCEVC) is a zinc-finger region. Residues 11–20 (TRVKNSRHSD) show a composition bias toward basic and acidic residues. One can recognise an ATP-cone domain in the interval 49–139 (IMVLKKDGRM…VYMDFSDADD (91 aa)).

This sequence belongs to the NrdR family. The cofactor is Zn(2+).

In terms of biological role, negatively regulates transcription of bacterial ribonucleotide reductase nrd genes and operons by binding to NrdR-boxes. The polypeptide is Transcriptional repressor NrdR (Anaplasma phagocytophilum (strain HZ)).